The following is a 460-amino-acid chain: Ammonium transporter Rh type B-A (460 aa).

Residues 1 to 10 (MTGYSTNMRI) are Cytoplasmic-facing. The helical transmembrane segment at 11–31 (KLPLFCLILQFITIILFAVFV) threads the bilayer. The Extracellular segment spans residues 32 to 62 (RYDHESDARGWHDELKNHSTANADNDFYFRY). N48 carries N-linked (GlcNAc...) asparagine glycosylation. The helical transmembrane segment at 63–83 (PSFQDVHVMIFIGFGFLMTFL) threads the bilayer. Topologically, residues 84 to 87 (KRYG) are cytoplasmic. Residues 88 to 108 (FSSVAFNFLIAAFGLQWSTLI) form a helical membrane-spanning segment. The Extracellular portion of the chain corresponds to 109–125 (QGFFHGFHDGKIHVGIE). The chain crosses the membrane as a helical span at residues 126–146 (SMINADFCTGAVLISFGAVLG). Over 147–150 (KTSP) the chain is Cytoplasmic. The helical transmembrane segment at 151–171 (VQLIVMTLIEVTLFGINEYII) threads the bilayer. Residues 172 to 179 (LNIVGAKD) are Extracellular-facing. The chain crosses the membrane as a helical span at residues 180–202 (AGGSMTIHTFGAYFGLIVSRVLY). The Cytoplasmic portion of the chain corresponds to 203-220 (RADLDKSRQREGSVYHSD). Residues 221 to 241 (LFAMIGTIYLWMFWPSFNSAV) form a helical membrane-spanning segment. At 242 to 252 (TAHGDDQHRTV) the chain is on the extracellular side. A helical membrane pass occupies residues 253 to 273 (LNTYYSLAACTLATFGFSALL). The Cytoplasmic segment spans residues 274–283 (NGEGKLDMVH). Residues 284–304 (IQNAALAGGVAVGTSGEMMLT) form a helical membrane-spanning segment. A topological domain (extracellular) is located at residue P305. A helical membrane pass occupies residues 306 to 326 (FGAMIAGTLAGIVSVLGYKYL). The Cytoplasmic segment spans residues 327-347 (TPVLDSKLKIQDTCGVHNLHG). A helical transmembrane segment spans residues 348 to 368 (MPGILGAVIGAIVALFATADI). Residues 369–394 (YGDGMDDVFPMIFDGSRTAKQQSLYQ) lie on the Extracellular side of the membrane. A helical membrane pass occupies residues 395-415 (FLALLVALGFAIVGGTVVGFI). The Cytoplasmic segment spans residues 416-460 (LKLPLFGTPSDAECFEDAVYWEVPGGEGHQQLTVVVNNEDPDTQA).

This sequence belongs to the ammonium transporter (TC 2.A.49) family. Rh subfamily.

It is found in the basolateral cell membrane. It localises to the cytoplasmic vesicle membrane. Its function is as follows. Functions as a specific ammonium transporter. This is Ammonium transporter Rh type B-A (rhbg-a) from Xenopus laevis (African clawed frog).